A 271-amino-acid polypeptide reads, in one-letter code: Sulfur carrier protein FdhD (271 aa).

The Cysteine persulfide intermediate role is filled by Cys-114.

Belongs to the FdhD family.

It is found in the cytoplasm. In terms of biological role, required for formate dehydrogenase (FDH) activity. Acts as a sulfur carrier protein that transfers sulfur from IscS to the molybdenum cofactor prior to its insertion into FDH. This Agrobacterium fabrum (strain C58 / ATCC 33970) (Agrobacterium tumefaciens (strain C58)) protein is Sulfur carrier protein FdhD.